The chain runs to 79 residues: Large ribosomal subunit protein uL24 (79 aa).

This sequence belongs to the universal ribosomal protein uL24 family. Part of the 50S ribosomal subunit.

One of two assembly initiator proteins, it binds directly to the 5'-end of the 23S rRNA, where it nucleates assembly of the 50S subunit. Functionally, one of the proteins that surrounds the polypeptide exit tunnel on the outside of the subunit. The polypeptide is Large ribosomal subunit protein uL24 (Lactobacillus gasseri (strain ATCC 33323 / DSM 20243 / BCRC 14619 / CIP 102991 / JCM 1131 / KCTC 3163 / NCIMB 11718 / NCTC 13722 / AM63)).